Consider the following 388-residue polypeptide: Succinate--CoA ligase [ADP-forming] subunit beta (388 aa).

One can recognise an ATP-grasp domain in the interval 9-244 (KQLFARYGLP…PSQEDSREAH (236 aa)). ATP-binding positions include Lys46, 53 to 55 (GRG), Glu99, Thr102, and Glu107. Asn199 and Asp213 together coordinate Mg(2+). Residues Asn264 and 321–323 (GIV) each bind substrate.

Belongs to the succinate/malate CoA ligase beta subunit family. Heterotetramer of two alpha and two beta subunits. Mg(2+) serves as cofactor.

The enzyme catalyses succinate + ATP + CoA = succinyl-CoA + ADP + phosphate. It carries out the reaction GTP + succinate + CoA = succinyl-CoA + GDP + phosphate. Its pathway is carbohydrate metabolism; tricarboxylic acid cycle; succinate from succinyl-CoA (ligase route): step 1/1. Succinyl-CoA synthetase functions in the citric acid cycle (TCA), coupling the hydrolysis of succinyl-CoA to the synthesis of either ATP or GTP and thus represents the only step of substrate-level phosphorylation in the TCA. The beta subunit provides nucleotide specificity of the enzyme and binds the substrate succinate, while the binding sites for coenzyme A and phosphate are found in the alpha subunit. This chain is Succinate--CoA ligase [ADP-forming] subunit beta, found in Pectobacterium atrosepticum (strain SCRI 1043 / ATCC BAA-672) (Erwinia carotovora subsp. atroseptica).